Here is a 490-residue protein sequence, read N- to C-terminus: Glutamyl-tRNA(Gln) amidotransferase subunit A (490 aa).

Residues Lys-78 and Ser-159 each act as charge relay system in the active site. Catalysis depends on Ser-183, which acts as the Acyl-ester intermediate.

It belongs to the amidase family. GatA subfamily. In terms of assembly, heterotrimer of A, B and C subunits.

The enzyme catalyses L-glutamyl-tRNA(Gln) + L-glutamine + ATP + H2O = L-glutaminyl-tRNA(Gln) + L-glutamate + ADP + phosphate + H(+). Functionally, allows the formation of correctly charged Gln-tRNA(Gln) through the transamidation of misacylated Glu-tRNA(Gln) in organisms which lack glutaminyl-tRNA synthetase. The reaction takes place in the presence of glutamine and ATP through an activated gamma-phospho-Glu-tRNA(Gln). The sequence is that of Glutamyl-tRNA(Gln) amidotransferase subunit A from Paramagnetospirillum magneticum (strain ATCC 700264 / AMB-1) (Magnetospirillum magneticum).